The sequence spans 101 residues: Acylphosphatase (101 aa).

An Acylphosphatase-like domain is found at R12–R98. Active-site residues include R27 and N45.

This sequence belongs to the acylphosphatase family.

The catalysed reaction is an acyl phosphate + H2O = a carboxylate + phosphate + H(+). This chain is Acylphosphatase (acyP), found in Nostoc sp. (strain PCC 7120 / SAG 25.82 / UTEX 2576).